The sequence spans 440 residues: C-terminal-binding protein 1 (440 aa).

The interval 1-70 is interaction with GLIS2 1; it reads MGSSHLLNKG…EIHEKVLNEA (70 aa). Residues S100, 180–185, D204, 237–243, 264–266, and D290 each bind NAD(+); these read IGLGRV, CGLNEHN, and TAR. Residue R266 is part of the active site. The interaction with GLIS2 2 stretch occupies residues 288-360; that stretch reads ALDVHESEPF…VNKDHLTAAT (73 aa). E295 is a catalytic residue. Phosphoserine is present on S300. H315 (proton donor) is an active-site residue. An NAD(+)-binding site is contributed by 315 to 318; sequence HAAW. Residues 408-440 are disordered; the sequence is SHGLPPVAHPPHAPSPGQTVKPEADRDHASDQL. Residue S422 is modified to Phosphoserine; by HIPK2. K428 is covalently cross-linked (Glycyl lysine isopeptide (Lys-Gly) (interchain with G-Cter in SUMO)). The segment covering 429–440 has biased composition (basic and acidic residues); the sequence is PEADRDHASDQL.

Belongs to the D-isomer specific 2-hydroxyacid dehydrogenase family. As to quaternary structure, homo- or heterodimer. Heterodimer with CTBP2. Interacts with PRDM16; the interaction represses white adipose tissue (WAT)-specific genes expression. Interacts with GLIS2, FOXP2, HDAC4, HDAC5, HDAC9 and ZNF217. Interacts with ELK3 (via its PXDLS motif). Interacts with RBBP8 (via its PXDLS motif); the interaction is disrupted by binding to adenovirus E1A. Interacts with FOXP1, HIPK2, PNN, NRIP1, MECOM, ZFHX1B and WIZ. Interacts with ZNF366 (via PXDLS motif). Interaction with SATB1 (non-acetylated form); the interaction stabilizes its attachment to DNA and promotes transcription repression. Interacts with BCL6; the interaction is required for BCL6 transcriptional autoinhibition and inhibition of some BCL6 target genes. Interacts with IKZF4. Interacts with MCRIP1 (unphosphorylated form, via the PXDLS motif); competitively inhibiting CTBP-ZEB1 interaction. Interacts with Bassoon/BSN; this interaction targets and anchors CTBP1 to presynapses. Interacts with SIMC1. In terms of assembly, (Microbial infection) Interacts with Epstein-Barr virus EBNA3. Interacts with Epstein-Barr virus EBNA6; this interaction leads to gene repression, but also seems to interfere with the repressive function of CtBP pre-bound to DNA, leading to EBNA6 mediated up-regulation of many cellular genes. (Microbial infection) Interacts with adenovirus E1A protein (via its C-terminus); the interaction disrupts the interaction of CTBP1 with RBBP8. As to quaternary structure, (Microbial infection) Interacts with human adenovirus 5 E1A protein; this interaction seems to potentiate viral replication. Requires NAD(+) as cofactor. Post-translationally, the level of phosphorylation appears to be regulated during the cell cycle. Phosphorylation by HIPK2 on Ser-422 induces proteasomal degradation. In terms of processing, ADP-ribosylated; when cells are exposed to brefeldin A. Sumoylation on Lys-428 is promoted by the E3 SUMO-protein ligase CBX4. As to expression, expressed in germinal center B-cells.

It localises to the cytoplasm. Its subcellular location is the nucleus. Its function is as follows. Corepressor targeting diverse transcription regulators such as GLIS2 or BCL6. Has dehydrogenase activity. Involved in controlling the equilibrium between tubular and stacked structures in the Golgi complex. Functions in brown adipose tissue (BAT) differentiation. This is C-terminal-binding protein 1 (CTBP1) from Homo sapiens (Human).